The chain runs to 116 residues: Large ribosomal subunit protein bL20 (116 aa).

The protein belongs to the bacterial ribosomal protein bL20 family.

In terms of biological role, binds directly to 23S ribosomal RNA and is necessary for the in vitro assembly process of the 50S ribosomal subunit. It is not involved in the protein synthesizing functions of that subunit. This is Large ribosomal subunit protein bL20 (rplT) from Helicobacter pylori (strain ATCC 700392 / 26695) (Campylobacter pylori).